The chain runs to 90 residues: Small ribosomal subunit protein uS15 (90 aa).

This sequence belongs to the universal ribosomal protein uS15 family. Part of the 30S ribosomal subunit. Forms a bridge to the 50S subunit in the 70S ribosome, contacting the 23S rRNA.

One of the primary rRNA binding proteins, it binds directly to 16S rRNA where it helps nucleate assembly of the platform of the 30S subunit by binding and bridging several RNA helices of the 16S rRNA. Functionally, forms an intersubunit bridge (bridge B4) with the 23S rRNA of the 50S subunit in the ribosome. The chain is Small ribosomal subunit protein uS15 from Campylobacter lari (strain RM2100 / D67 / ATCC BAA-1060).